The following is a 213-amino-acid chain: ATP phosphoribosyltransferase (213 aa).

The protein belongs to the ATP phosphoribosyltransferase family. Short subfamily. Heteromultimer composed of HisG and HisZ subunits.

Its subcellular location is the cytoplasm. The catalysed reaction is 1-(5-phospho-beta-D-ribosyl)-ATP + diphosphate = 5-phospho-alpha-D-ribose 1-diphosphate + ATP. Its pathway is amino-acid biosynthesis; L-histidine biosynthesis; L-histidine from 5-phospho-alpha-D-ribose 1-diphosphate: step 1/9. Catalyzes the condensation of ATP and 5-phosphoribose 1-diphosphate to form N'-(5'-phosphoribosyl)-ATP (PR-ATP). Has a crucial role in the pathway because the rate of histidine biosynthesis seems to be controlled primarily by regulation of HisG enzymatic activity. The sequence is that of ATP phosphoribosyltransferase from Bacillus licheniformis (strain ATCC 14580 / DSM 13 / JCM 2505 / CCUG 7422 / NBRC 12200 / NCIMB 9375 / NCTC 10341 / NRRL NRS-1264 / Gibson 46).